Here is a 130-residue protein sequence, read N- to C-terminus: Large ribosomal subunit protein bL12c (130 aa).

It belongs to the bacterial ribosomal protein bL12 family. Homodimer. Part of the ribosomal stalk of the 50S ribosomal subunit. Forms a multimeric L10(L12)X complex, where L10 forms an elongated spine to which 2 to 4 L12 dimers bind in a sequential fashion. Binds GTP-bound translation factors.

It localises to the plastid. It is found in the chloroplast. In terms of biological role, forms part of the ribosomal stalk which helps the ribosome interact with GTP-bound translation factors. Is thus essential for accurate translation. The sequence is that of Large ribosomal subunit protein bL12c from Cyanidium caldarium (Red alga).